A 131-amino-acid polypeptide reads, in one-letter code: Squamosa promoter-binding protein 1 (131 aa).

The span at 1–10 (MDTSKGEGKR) shows a compositional bias: basic and acidic residues. The tract at residues 1–52 (MDTSKGEGKRVIKLPGSQEQGEEEDDIGEDSKKTRALTPSGKRASGSTQRSC) is disordered. Residues 49 to 126 (QRSCQVENCA…AGHNERRRKS (78 aa)) form an SBP-type zinc finger. Residues Cys-52, Cys-57, Cys-74, His-77, Cys-93, Cys-96, His-100, and Cys-112 each coordinate Zn(2+). A Bipartite nuclear localization signal motif is present at residues 109–125 (KRSCRRRLAGHNERRRK).

The protein resides in the nucleus. Functionally, probable transcriptional factor. Binds to the promoter of the SQUAMOSA gene. The chain is Squamosa promoter-binding protein 1 (SBP1) from Antirrhinum majus (Garden snapdragon).